The sequence spans 399 residues: Bombesin receptor subtype-3 (399 aa).

Residues 1-31 show a composition bias toward polar residues; sequence MSQRQPQSPNQTLISTTNDTESSSSVVPNDS. A disordered region spans residues 1–38; that stretch reads MSQRQPQSPNQTLISTTNDTESSSSVVPNDSTNKRRTG. The Extracellular segment spans residues 1 to 41; it reads MSQRQPQSPNQTLISTTNDTESSSSVVPNDSTNKRRTGDNS. 3 N-linked (GlcNAc...) asparagine glycosylation sites follow: Asn-10, Asn-18, and Asn-29. Residues 42–63 traverse the membrane as a helical segment; sequence PGIEALCAIYITYAVIISVGIL. Residues 64-82 are Cytoplasmic-facing; that stretch reads GNAILIKVFFKTKSMQTVP. A helical transmembrane segment spans residues 83 to 103; the sequence is NIFITSLAFGDLLLLLTCVPV. Topologically, residues 104–121 are extracellular; it reads DVTHYLAEGWLFGRIGCK. Cys-120 and Cys-203 are oxidised to a cystine. Residues 122 to 143 form a helical membrane-spanning segment; the sequence is VLSFIRLTSVGVSVFTLTILSA. Over 144-163 the chain is Cytoplasmic; that stretch reads DRYKAVVKPLERQPPNAILK. The helical transmembrane segment at 164 to 184 threads the bilayer; sequence TCAKAGCIWIMSMIIALPEAI. Residues 185 to 220 are Extracellular-facing; it reads FSNVYTFQDPDKNVTFKACASYPVSERLLQEIHSLL. The chain crosses the membrane as a helical span at residues 221–241; it reads CFLVFYIIPLSIISVYYSLIA. Residues 242 to 272 lie on the Cytoplasmic side of the membrane; the sequence is RTLYKSTLNIPTEEQRHARKQIESRKRIAKT. The chain crosses the membrane as a helical span at residues 273–293; it reads VLVLVALFALCWLPNHLLYLY. Over 294-313 the chain is Extracellular; the sequence is RSFTSQTYMDSSTVHLFVTI. A helical membrane pass occupies residues 314-333; sequence ISRILAFSNSCVNPFALYWL. Residues 334 to 399 are Cytoplasmic-facing; sequence SNTFQQHFKA…CSVKKEDDRV (66 aa).

The protein belongs to the G-protein coupled receptor 1 family. Interacts with C6orf89.

The protein localises to the cell membrane. Role in sperm cell division, maturation, or function. This receptor mediates its action by association with G proteins that activate a phosphatidylinositol-calcium second messenger system. The chain is Bombesin receptor subtype-3 (BRS3) from Ovis aries (Sheep).